The sequence spans 146 residues: Ribosome maturation factor RimP (146 aa).

Belongs to the RimP family.

It localises to the cytoplasm. Its function is as follows. Required for maturation of 30S ribosomal subunits. The polypeptide is Ribosome maturation factor RimP (Helicobacter pylori (strain HPAG1)).